The sequence spans 37 residues: MQKFLTTAPVVAAIWFTLTAGILIEWNRFFPDLLFHP.

Residues 4-24 (FLTTAPVVAAIWFTLTAGILI) traverse the membrane as a helical segment.

It belongs to the PsaJ family.

It is found in the cellular thylakoid membrane. May help in the organization of the PsaE and PsaF subunits. The protein is Photosystem I reaction center subunit IX of Synechococcus sp. (strain WH7803).